The following is a 516-amino-acid chain: GMP synthase [glutamine-hydrolyzing] (516 aa).

The 191-residue stretch at 8-198 (KILILDFGSQ…VVNICGCDTL (191 aa)) folds into the Glutamine amidotransferase type-1 domain. C84 functions as the Nucleophile in the catalytic mechanism. Residues H172 and E174 contribute to the active site. Positions 199 to 391 (WNIENIIEND…LGLPYNMLYR (193 aa)) constitute a GMPS ATP-PPase domain. 226–232 (SGGVDSS) contacts ATP.

As to quaternary structure, homodimer.

The catalysed reaction is XMP + L-glutamine + ATP + H2O = GMP + L-glutamate + AMP + diphosphate + 2 H(+). Its pathway is purine metabolism; GMP biosynthesis; GMP from XMP (L-Gln route): step 1/1. Functionally, catalyzes the synthesis of GMP from XMP. This is GMP synthase [glutamine-hydrolyzing] from Francisella tularensis subsp. mediasiatica (strain FSC147).